Reading from the N-terminus, the 96-residue chain is Cytochrome b (96 aa).

3 helical membrane-spanning segments follow: residues 1–15, 39–60, and 75–95; these read LCXI…FLAM, WLIR…YLHI, and WNVG…GYVL. 2 residues coordinate heme b: His45 and His59.

It belongs to the cytochrome b family. The cytochrome bc1 complex contains 3 respiratory subunits (MT-CYB, CYC1 and UQCRFS1), 2 core proteins (UQCRC1 and UQCRC2) and probably 6 low-molecular weight proteins. It depends on heme b as a cofactor.

Its subcellular location is the mitochondrion inner membrane. Its function is as follows. Component of the ubiquinol-cytochrome c reductase complex (complex III or cytochrome b-c1 complex) that is part of the mitochondrial respiratory chain. The b-c1 complex mediates electron transfer from ubiquinol to cytochrome c. Contributes to the generation of a proton gradient across the mitochondrial membrane that is then used for ATP synthesis. The sequence is that of Cytochrome b (mt-cyb) from Geophagus steindachneri (Red hump earth eater).